A 979-amino-acid chain; its full sequence is UPF0182 protein BCG_0095 (979 aa).

The next 7 membrane-spanning stretches (helical) occupy residues 19 to 39 (LVTA…LVDI), 63 to 83 (LAIV…ALLL), 114 to 134 (LFGW…ASFD), 174 to 194 (WLFV…YLFG), 211 to 231 (VQLA…YWLD), 260 to 280 (KLVL…AIFL), and 288 to 308 (MAAA…PLLM). The interval 898-948 (GTGRVATAPGGDAASAPPPGAGGPAPPQAVPPPRTTQPPAAPPRGPDVPPA) is disordered. The segment covering 902–912 (VATAPGGDAAS) has biased composition (low complexity). Over residues 913-946 (APPPGAGGPAPPQAVPPPRTTQPPAAPPRGPDVP) the composition is skewed to pro residues.

Belongs to the UPF0182 family.

The protein localises to the cell membrane. This is UPF0182 protein BCG_0095 from Mycobacterium bovis (strain BCG / Pasteur 1173P2).